The chain runs to 270 residues: 4-hydroxy-tetrahydrodipicolinate reductase (270 aa).

Residues 11 to 16 (GASGRM) and glutamate 37 contribute to the NAD(+) site. Arginine 38 is an NADP(+) binding site. NAD(+) contacts are provided by residues 101 to 103 (GTT) and 125 to 128 (APNM). Catalysis depends on histidine 158, which acts as the Proton donor/acceptor. Histidine 159 provides a ligand contact to (S)-2,3,4,5-tetrahydrodipicolinate. Lysine 162 serves as the catalytic Proton donor. Position 168–169 (168–169 (GT)) interacts with (S)-2,3,4,5-tetrahydrodipicolinate.

The protein belongs to the DapB family.

It is found in the cytoplasm. It carries out the reaction (S)-2,3,4,5-tetrahydrodipicolinate + NAD(+) + H2O = (2S,4S)-4-hydroxy-2,3,4,5-tetrahydrodipicolinate + NADH + H(+). The catalysed reaction is (S)-2,3,4,5-tetrahydrodipicolinate + NADP(+) + H2O = (2S,4S)-4-hydroxy-2,3,4,5-tetrahydrodipicolinate + NADPH + H(+). The protein operates within amino-acid biosynthesis; L-lysine biosynthesis via DAP pathway; (S)-tetrahydrodipicolinate from L-aspartate: step 4/4. Catalyzes the conversion of 4-hydroxy-tetrahydrodipicolinate (HTPA) to tetrahydrodipicolinate. The chain is 4-hydroxy-tetrahydrodipicolinate reductase from Shewanella frigidimarina (strain NCIMB 400).